The sequence spans 654 residues: uncharacterized protein (654 aa).

Residues 1 to 13 (MSNLILTPSNNGT) show a composition bias toward polar residues. The segment at 1–23 (MSNLILTPSNNGTERPYRSRKTR) is disordered. A DNA-binding region (zn(2)-C6 fungal-type) is located at residues 25 to 54 (CDNCRLRKSRCVVESIGNPCLLCTQLKIPC). The interval 63-96 (RNKQKKQQDSVSDDTPSEATTTTNDDRDPKYNAL) is disordered.

It is found in the cytoplasm. The protein localises to the nucleus. This is an uncharacterized protein from Schizosaccharomyces pombe (strain 972 / ATCC 24843) (Fission yeast).